We begin with the raw amino-acid sequence, 568 residues long: PTS system lactose-specific EIICB component (568 aa).

The region spanning 8 to 409 (IEKGKPFFEK…LVDTVIYYPF (402 aa)) is the PTS EIIC type-3 domain. A run of 10 helical transmembrane segments spans residues 30-50 (GFIS…IAYV), 65-85 (MLMT…AGTT), 103-123 (INFI…AADP), 128-148 (GFLS…AAFI), 183-203 (FAFS…VIGV), 222-242 (GYLG…VGIH), 246-266 (IVEP…AHLI), 283-303 (FIVT…FMWL), 339-359 (VFFI…KFFV), and 381-401 (IVLG…LILV). One can recognise a PTS EIIB type-3 domain in the interval 465 to 568 (ETNVLVLCAG…LAFVEEQFKD (104 aa)). Cys-472 (phosphocysteine intermediate; for EIIB activity) is an active-site residue. Cys-472 carries the phosphocysteine; by EIIA modification.

The protein resides in the cell membrane. The enzyme catalyses lactose(out) + N(pros)-phospho-L-histidyl-[protein] = lactose 6-phosphate(in) + L-histidyl-[protein]. Its function is as follows. The phosphoenolpyruvate-dependent sugar phosphotransferase system (sugar PTS), a major carbohydrate active transport system, catalyzes the phosphorylation of incoming sugar substrates concomitantly with their translocation across the cell membrane. The enzyme II LacEF PTS system is involved in lactose transport. This Streptococcus mutans serotype c (strain ATCC 700610 / UA159) protein is PTS system lactose-specific EIICB component.